The following is a 155-amino-acid chain: Transcriptional repressor NrdR (155 aa).

Residues 3–34 (CPFCSHFESKVVDSRPTDEGQAIRRRRECVSC) fold into a zinc finger. The ATP-cone domain occupies 49 to 139 (LIVVKKSGNR…VYREFKDINT (91 aa)).

It belongs to the NrdR family. Requires Zn(2+) as cofactor.

Negatively regulates transcription of bacterial ribonucleotide reductase nrd genes and operons by binding to NrdR-boxes. The polypeptide is Transcriptional repressor NrdR (Alkaliphilus metalliredigens (strain QYMF)).